Reading from the N-terminus, the 498-residue chain is Glycerol kinase (498 aa).

Residue Thr-14 coordinates ADP. Residues Thr-14, Thr-15, and Ser-16 each coordinate ATP. Thr-14 is a sn-glycerol 3-phosphate binding site. Arg-18 lines the ADP pocket. Residues Arg-84, Glu-85, Tyr-136, and Asp-243 each contribute to the sn-glycerol 3-phosphate site. 5 residues coordinate glycerol: Arg-84, Glu-85, Tyr-136, Asp-243, and Gln-244. ADP-binding residues include Thr-265 and Gly-308. ATP is bound by residues Thr-265, Gly-308, Gln-312, and Gly-409. ADP is bound by residues Gly-409 and Asn-413.

The protein belongs to the FGGY kinase family.

It catalyses the reaction glycerol + ATP = sn-glycerol 3-phosphate + ADP + H(+). It participates in polyol metabolism; glycerol degradation via glycerol kinase pathway; sn-glycerol 3-phosphate from glycerol: step 1/1. Inhibited by fructose 1,6-bisphosphate (FBP). In terms of biological role, key enzyme in the regulation of glycerol uptake and metabolism. Catalyzes the phosphorylation of glycerol to yield sn-glycerol 3-phosphate. In Shewanella frigidimarina (strain NCIMB 400), this protein is Glycerol kinase.